Consider the following 357-residue polypeptide: MISEAPPFWWRKADWRAWLLLPVSFLYGRIAGHRMAHGRRASVAIPVICVGNFTVGGAGKTPTALTIARAAKAKGLKPGFLSRGYGGSLDVTTVVDPDHHRAVAVGDEPLLLAREALTVISRRRVDGAQRLVAEGADLIIMDDGFQSARLAIDYALLVIDATRGLGNGHIVPAGPVRAPIRQQLRSATALLKVGGGNAADRIVRMAARAAKPYFTASLKVRGDNTLAGMKVLAFAGIADPAKFFRTVESRGAEITVAKSFGDHEHLTEDEIDDILTTAERQDLLIVTTSKDFVRLSGHPGKAAQLAEKCRVIEVDMVFEDHLAPSLIIDRAIVACRERRLREMKAGIKAMPGKAGPL.

54 to 61 (TVGGAGKT) contributes to the ATP binding site.

It belongs to the LpxK family.

It catalyses the reaction a lipid A disaccharide + ATP = a lipid IVA + ADP + H(+). It functions in the pathway glycolipid biosynthesis; lipid IV(A) biosynthesis; lipid IV(A) from (3R)-3-hydroxytetradecanoyl-[acyl-carrier-protein] and UDP-N-acetyl-alpha-D-glucosamine: step 6/6. In terms of biological role, transfers the gamma-phosphate of ATP to the 4'-position of a tetraacyldisaccharide 1-phosphate intermediate (termed DS-1-P) to form tetraacyldisaccharide 1,4'-bis-phosphate (lipid IVA). The chain is Tetraacyldisaccharide 4'-kinase from Rhizobium leguminosarum bv. trifolii (strain WSM2304).